A 92-amino-acid polypeptide reads, in one-letter code: Large ribosomal subunit protein bL27 (92 aa).

Residues 1–21 form a disordered region; the sequence is MSKKKGVGSSRNGRDSESKRL. The span at 12-21 shows a compositional bias: basic and acidic residues; sequence NGRDSESKRL.

It belongs to the bacterial ribosomal protein bL27 family.

This Halothermothrix orenii (strain H 168 / OCM 544 / DSM 9562) protein is Large ribosomal subunit protein bL27.